The chain runs to 468 residues: Cyclin-T1.1 (468 aa).

The span at 336–354 shows a compositional bias: basic and acidic residues; the sequence is KERGVEEERRKRERDRMAG. The segment at 336-468 is disordered; it reads KERGVEEERR…DMDLEDGELE (133 aa). Residues 387–402 show a composition bias toward pro residues; sequence APPPIPPQLNFPPPPI. The segment covering 458–468 has biased composition (acidic residues); sequence SDMDLEDGELE.

It belongs to the cyclin family. Cyclin C subfamily.

Regulatory subunit of the cyclin-dependent kinase pair (CDK9/cyclin T) complex, also called positive transcription elongation factor B (P-TEFb), which is proposed to facilitate the transition from abortive to production elongation by phosphorylating the CTD (carboxy-terminal domain) of the large subunit of RNA polymerase II (RNAP II). In Caenorhabditis elegans, this protein is Cyclin-T1.1.